Consider the following 670-residue polypeptide: DNA ligase (670 aa).

NAD(+) contacts are provided by residues 32–36 (DAEYD), 81–82 (SL), and E113. The N6-AMP-lysine intermediate role is filled by K115. The NAD(+) site is built by R136, E173, K290, and K314. The Zn(2+) site is built by C406, C409, C424, and C430. A BRCT domain is found at 592–670 (EIDSPFAGKT…EQEMMRLLGE (79 aa)).

Belongs to the NAD-dependent DNA ligase family. LigA subfamily. It depends on Mg(2+) as a cofactor. Mn(2+) is required as a cofactor.

The enzyme catalyses NAD(+) + (deoxyribonucleotide)n-3'-hydroxyl + 5'-phospho-(deoxyribonucleotide)m = (deoxyribonucleotide)n+m + AMP + beta-nicotinamide D-nucleotide.. Functionally, DNA ligase that catalyzes the formation of phosphodiester linkages between 5'-phosphoryl and 3'-hydroxyl groups in double-stranded DNA using NAD as a coenzyme and as the energy source for the reaction. It is essential for DNA replication and repair of damaged DNA. In Erwinia tasmaniensis (strain DSM 17950 / CFBP 7177 / CIP 109463 / NCPPB 4357 / Et1/99), this protein is DNA ligase.